The primary structure comprises 119 residues: Large ribosomal subunit protein uL18 (119 aa).

This sequence belongs to the universal ribosomal protein uL18 family. As to quaternary structure, part of the 50S ribosomal subunit; part of the 5S rRNA/L5/L18/L25 subcomplex. Contacts the 5S and 23S rRNAs.

Its function is as follows. This is one of the proteins that bind and probably mediate the attachment of the 5S RNA into the large ribosomal subunit, where it forms part of the central protuberance. The protein is Large ribosomal subunit protein uL18 of Nitratidesulfovibrio vulgaris (strain DP4) (Desulfovibrio vulgaris).